Here is a 254-residue protein sequence, read N- to C-terminus: Ribosomal RNA small subunit methyltransferase J (254 aa).

Residues 107 to 108, 123 to 124, and D177 each bind S-adenosyl-L-methionine; these read RD and ER.

This sequence belongs to the methyltransferase superfamily. RsmJ family.

It is found in the cytoplasm. It carries out the reaction guanosine(1516) in 16S rRNA + S-adenosyl-L-methionine = N(2)-methylguanosine(1516) in 16S rRNA + S-adenosyl-L-homocysteine + H(+). Its function is as follows. Specifically methylates the guanosine in position 1516 of 16S rRNA. The chain is Ribosomal RNA small subunit methyltransferase J from Histophilus somni (strain 2336) (Haemophilus somnus).